We begin with the raw amino-acid sequence, 436 residues long: Serine--tRNA ligase (436 aa).

242-244 provides a ligand contact to L-serine; that stretch reads TAE. 273–275 lines the ATP pocket; sequence RSE. Position 296 (Glu296) interacts with L-serine. ATP is bound at residue 360 to 363; it reads EISS. Ser395 is an L-serine binding site.

The protein belongs to the class-II aminoacyl-tRNA synthetase family. Type-1 seryl-tRNA synthetase subfamily. Homodimer. The tRNA molecule binds across the dimer.

The protein resides in the cytoplasm. It carries out the reaction tRNA(Ser) + L-serine + ATP = L-seryl-tRNA(Ser) + AMP + diphosphate + H(+). It catalyses the reaction tRNA(Sec) + L-serine + ATP = L-seryl-tRNA(Sec) + AMP + diphosphate + H(+). It participates in aminoacyl-tRNA biosynthesis; selenocysteinyl-tRNA(Sec) biosynthesis; L-seryl-tRNA(Sec) from L-serine and tRNA(Sec): step 1/1. In terms of biological role, catalyzes the attachment of serine to tRNA(Ser). Is also able to aminoacylate tRNA(Sec) with serine, to form the misacylated tRNA L-seryl-tRNA(Sec), which will be further converted into selenocysteinyl-tRNA(Sec). In Polynucleobacter asymbioticus (strain DSM 18221 / CIP 109841 / QLW-P1DMWA-1) (Polynucleobacter necessarius subsp. asymbioticus), this protein is Serine--tRNA ligase.